The primary structure comprises 156 residues: MRIKLIAVGGKMPGWVEQGYNEYVKRMPRDMPLQLIEIPMPRRQKNADPHKLKIQEGESILQSLGSGDHVVALEVEGKSWSTPQLSQQMERWRMSGQDVALLVGGPDGLSDACRARANQQWSLSPLTLPHPLVRVLLAEQLYRAWTILQGHPYHRE.

S-adenosyl-L-methionine contacts are provided by residues Leu-73, Gly-104, and 123 to 128 (LSPLTL).

This sequence belongs to the RNA methyltransferase RlmH family. Homodimer.

The protein localises to the cytoplasm. It carries out the reaction pseudouridine(1915) in 23S rRNA + S-adenosyl-L-methionine = N(3)-methylpseudouridine(1915) in 23S rRNA + S-adenosyl-L-homocysteine + H(+). Its function is as follows. Specifically methylates the pseudouridine at position 1915 (m3Psi1915) in 23S rRNA. In Hahella chejuensis (strain KCTC 2396), this protein is Ribosomal RNA large subunit methyltransferase H.